The sequence spans 312 residues: UDP-N-acetylenolpyruvoylglucosamine reductase (312 aa).

The FAD-binding PCMH-type domain maps to 24-206 (GIGGPADLFA…SADILKVRNE (183 aa)). Residue Arg-166 is part of the active site. The active-site Proton donor is the Ser-217. Glu-307 is a catalytic residue.

Belongs to the MurB family. It depends on FAD as a cofactor.

The protein resides in the cytoplasm. It catalyses the reaction UDP-N-acetyl-alpha-D-muramate + NADP(+) = UDP-N-acetyl-3-O-(1-carboxyvinyl)-alpha-D-glucosamine + NADPH + H(+). The protein operates within cell wall biogenesis; peptidoglycan biosynthesis. In terms of biological role, cell wall formation. This is UDP-N-acetylenolpyruvoylglucosamine reductase from Solibacter usitatus (strain Ellin6076).